Consider the following 659-residue polypeptide: Fructose-1,6-bisphosphatase class 3 (659 aa).

The protein belongs to the FBPase class 3 family. Mn(2+) serves as cofactor.

The catalysed reaction is beta-D-fructose 1,6-bisphosphate + H2O = beta-D-fructose 6-phosphate + phosphate. Its pathway is carbohydrate biosynthesis; gluconeogenesis. The chain is Fructose-1,6-bisphosphatase class 3 from Clostridium botulinum (strain Alaska E43 / Type E3).